We begin with the raw amino-acid sequence, 207 residues long: NADH-quinone oxidoreductase subunit A (207 aa).

The next 3 membrane-spanning stretches (helical) occupy residues 6 to 26 (LSAIAFILAAIGLVVFMLVVP), 62 to 82 (LVAIFFVIFDLEALYLYAYAV), and 87 to 107 (AGWLGFAAAAIFITILIIGLV).

This sequence belongs to the complex I subunit 3 family. In terms of assembly, NDH-1 is composed of 14 different subunits. Subunits NuoA, H, J, K, L, M, N constitute the membrane sector of the complex.

It is found in the cell inner membrane. It carries out the reaction a quinone + NADH + 5 H(+)(in) = a quinol + NAD(+) + 4 H(+)(out). In terms of biological role, NDH-1 shuttles electrons from NADH, via FMN and iron-sulfur (Fe-S) centers, to quinones in the respiratory chain. The immediate electron acceptor for the enzyme in this species is believed to be ubiquinone. Couples the redox reaction to proton translocation (for every two electrons transferred, four hydrogen ions are translocated across the cytoplasmic membrane), and thus conserves the redox energy in a proton gradient. The protein is NADH-quinone oxidoreductase subunit A of Psychrobacter cryohalolentis (strain ATCC BAA-1226 / DSM 17306 / VKM B-2378 / K5).